A 165-amino-acid chain; its full sequence is V-type proton ATPase 16 kDa proteolipid subunit (165 aa).

Topologically, residues 1–10 are lumenal; the sequence is MSSVFSGDET. Residues 11-33 form a helical membrane-spanning segment; that stretch reads APFFGFLGAAAALVFSCMGAAYG. Residues 34–55 are Cytoplasmic-facing; that stretch reads TAKSGVGVASMGVMRPELVMKS. A helical membrane pass occupies residues 56–76; sequence IVPVVMAGVLGIYGLIIAVII. Residues 77–95 lie on the Lumenal side of the membrane; that stretch reads STGINPKAKPYFLFDGYAH. The chain crosses the membrane as a helical span at residues 96–117; it reads LSSGLACGLAGLAAGMAIGIVG. The Cytoplasmic portion of the chain corresponds to 118-129; the sequence is DAGVRANAQQPK. The helical transmembrane segment at 130 to 155 threads the bilayer; it reads LFVGMILILIFAEALALYGLIVGIIL. Topologically, residues 156 to 165 are lumenal; sequence SSRAGQSRAD.

The protein belongs to the V-ATPase proteolipid subunit family. As to quaternary structure, V-ATPase is a heteromultimeric enzyme composed of a peripheral catalytic V1 complex (main components: subunits A, B, C, D, E, and F) attached to an integral membrane V0 proton pore complex (main component: the proteolipid protein; which is present as a hexamer that forms the proton-conducting pore).

It is found in the vacuole membrane. Proton-conducting pore forming subunit of the membrane integral V0 complex of vacuolar ATPase. V-ATPase is responsible for acidifying a variety of intracellular compartments in eukaryotic cells. The protein is V-type proton ATPase 16 kDa proteolipid subunit (VATP-P1) of Avena sativa (Oat).